We begin with the raw amino-acid sequence, 494 residues long: Glutamyl-tRNA(Gln) amidotransferase subunit A (494 aa).

Residues Lys-78 and Ser-158 each act as charge relay system in the active site. The active-site Acyl-ester intermediate is the Ser-182.

It belongs to the amidase family. GatA subfamily. In terms of assembly, heterotrimer of A, B and C subunits.

It carries out the reaction L-glutamyl-tRNA(Gln) + L-glutamine + ATP + H2O = L-glutaminyl-tRNA(Gln) + L-glutamate + ADP + phosphate + H(+). In terms of biological role, allows the formation of correctly charged Gln-tRNA(Gln) through the transamidation of misacylated Glu-tRNA(Gln) in organisms which lack glutaminyl-tRNA synthetase. The reaction takes place in the presence of glutamine and ATP through an activated gamma-phospho-Glu-tRNA(Gln). This chain is Glutamyl-tRNA(Gln) amidotransferase subunit A, found in Jannaschia sp. (strain CCS1).